Consider the following 336-residue polypeptide: Cytoskeleton protein RodZ (336 aa).

Topologically, residues 1–111 are cytoplasmic; it reads MNTEATHDKT…LGKRRKKRDG (111 aa). The HTH cro/C1-type domain occupies 19 to 71; it reads LRNAREQLGLSQQAVAERLCLKVSTVRDIEEDKAPADLASTFLRGYIRSYAKL. A DNA-binding region (H-T-H motif) is located at residues 30 to 49; that stretch reads QQAVAERLCLKVSTVRDIEE. Residues 112 to 132 traverse the membrane as a helical; Signal-anchor for type II membrane protein segment; sequence WLMSFTWLVLFVVIGLTGAWW. At 133–336 the chain is on the periplasmic side; sequence WQNHKAQQEE…TVSAEQSAAQ (204 aa). Positions 152–164 are enriched in low complexity; the sequence is AALNNSGNNGAQS. The interval 152-235 is disordered; sequence AALNNSGNNG…TTTGNVNVTQ (84 aa). Polar residues-rich tracts occupy residues 165 to 190 and 200 to 217; these read VPLNTDSASTSSEPQTAETDSQTVEP and PDQTAAQNAVVSPSQANV. Residues 220–235 show a composition bias toward low complexity; that stretch reads APAVTPTTTGNVNVTQ.

Belongs to the RodZ family.

The protein resides in the cell inner membrane. Functionally, cytoskeletal protein that is involved in cell-shape control through regulation of the length of the long axis. In Enterobacter sp. (strain 638), this protein is Cytoskeleton protein RodZ.